The chain runs to 177 residues: Large ribosomal subunit protein uL10 (177 aa).

It belongs to the universal ribosomal protein uL10 family. In terms of assembly, part of the ribosomal stalk of the 50S ribosomal subunit. The N-terminus interacts with L11 and the large rRNA to form the base of the stalk. The C-terminus forms an elongated spine to which L12 dimers bind in a sequential fashion forming a multimeric L10(L12)X complex.

Forms part of the ribosomal stalk, playing a central role in the interaction of the ribosome with GTP-bound translation factors. The protein is Large ribosomal subunit protein uL10 of Leptospira interrogans serogroup Icterohaemorrhagiae serovar copenhageni (strain Fiocruz L1-130).